We begin with the raw amino-acid sequence, 432 residues long: MIERVKGTRDFLPEEMVKRRWVFERIRERFETYGFKEVLTPTMEYTKLFELRSGEEVVKQLYAFKDKGGRDVSLRPDMTSSVARLYVNMFQTAPKPIKWYYIANMFRYEEPQSGRYREFWQAGVELIGSDKVEADAEVIALFVESYLATGLREFTVNIGDRILLDEFAKMLGVKDDIGLMRIIDKKDKLPQEDFINALKEFGLDKNGIEKVLELINIKGKPDEVLPLAEELFTSEVAKNEINRLYALIDLLEAYEVKDWIRIDLGIARGFDYYTSIVFEAIAPNDLGIGSIGGGGRYDNLIEVFGGKPTPATGFAIGIERLIPILEAKGLIPEVQIAPDVYVVPIGERMKKVAIRIATSLRKSGIKTEIELMGRKLKKAMDYANKVGVKKTIIVGEKDLERGVVTVRDMESGEQNEVKIDDIVEFMKNALKT.

This sequence belongs to the class-II aminoacyl-tRNA synthetase family.

Its subcellular location is the cytoplasm. It carries out the reaction tRNA(His) + L-histidine + ATP = L-histidyl-tRNA(His) + AMP + diphosphate + H(+). In Pyrococcus furiosus (strain ATCC 43587 / DSM 3638 / JCM 8422 / Vc1), this protein is Histidine--tRNA ligase.